The chain runs to 336 residues: UDP-3-O-acylglucosamine N-acyltransferase (336 aa).

His233 serves as the catalytic Proton acceptor.

This sequence belongs to the transferase hexapeptide repeat family. LpxD subfamily. Homotrimer.

It carries out the reaction a UDP-3-O-[(3R)-3-hydroxyacyl]-alpha-D-glucosamine + a (3R)-hydroxyacyl-[ACP] = a UDP-2-N,3-O-bis[(3R)-3-hydroxyacyl]-alpha-D-glucosamine + holo-[ACP] + H(+). It functions in the pathway bacterial outer membrane biogenesis; LPS lipid A biosynthesis. Catalyzes the N-acylation of UDP-3-O-acylglucosamine using 3-hydroxyacyl-ACP as the acyl donor. Is involved in the biosynthesis of lipid A, a phosphorylated glycolipid that anchors the lipopolysaccharide to the outer membrane of the cell. The polypeptide is UDP-3-O-acylglucosamine N-acyltransferase (Helicobacter pylori (strain HPAG1)).